The chain runs to 150 residues: MKVSRHAKILEIINSKDIDTQEELAEELKKMGMNVTQATVSRDIKELKLIKVLGNTGKYKYATINHTESYMSDKLISIFAQTVISVENIDKLIIIKTISGSAPGAGEAIDTLGFDGIAGTIAGDNTIFAMTRTNEKAQEITLKLKKIINA.

The protein belongs to the ArgR family.

It localises to the cytoplasm. It participates in amino-acid biosynthesis; L-arginine biosynthesis [regulation]. Functionally, regulates arginine biosynthesis genes. This chain is Arginine repressor, found in Clostridium botulinum (strain 657 / Type Ba4).